The sequence spans 311 residues: MTMLGALTGRQLSSGLKDQFDRYNRMDILGEGTYGVVYRAVDRATGQIVALKKVRLDRTDEGIPQTALREVSILQEIHHPNIVNLLDVICADGKLYLIFEYVDHDLKKALEKRGGAFTGTTLKKIIYQLLEGLSFCHRHRIVHRDLKPANILVTTDNSVKIADFGLARAFQIPMHTYTHEVVTLWYRAPEILLGEKHYTPAVDMWSIGCIFAELARGKVLFRGDSEIGQLFEIFQVLGTPMDAEGSWLGVSSLPDYRDVFPKWSGKPLTQVLPTLDGDAVDLLSQMLRYNPAERISAKAALQHPWFSDAMF.

The Protein kinase domain maps to 23-306 (YNRMDILGEG…AKAALQHPWF (284 aa)). ATP contacts are provided by residues 29-37 (LGEGTYGVV) and K52. T33 carries the phosphothreonine modification. The residue at position 34 (Y34) is a Phosphotyrosine. The active-site Proton acceptor is the D145.

It belongs to the protein kinase superfamily. CMGC Ser/Thr protein kinase family. CDC2/CDKX subfamily. Forms a stable but non-covalent complex with a regulatory subunit and with a cyclin.

The catalysed reaction is L-seryl-[protein] + ATP = O-phospho-L-seryl-[protein] + ADP + H(+). It catalyses the reaction L-threonyl-[protein] + ATP = O-phospho-L-threonyl-[protein] + ADP + H(+). Its activity is regulated as follows. Phosphorylation at Thr-33 or Tyr-34 inactivates the enzyme. Probably involved in the control of the cell cycle. The sequence is that of Cell division control protein 2 homolog 3 (CRK3) from Trypanosoma brucei brucei.